The chain runs to 324 residues: Holliday junction branch migration complex subunit RuvB (324 aa).

A large ATPase domain (RuvB-L) region spans residues 1–180; it reads MKSISCGKEY…FGIPLHLEFY (180 aa). Residues I19, R20, G61, K64, T65, T66, 127–129, R170, Y180, and R217 each bind ATP; that span reads EDF. Position 65 (T65) interacts with Mg(2+). Residues 181 to 251 form a small ATPAse domain (RuvB-S) region; sequence SFEELVNIIK…VADSVLLKLG (71 aa). The interval 254–324 is head domain (RuvB-H); sequence KMGLNKLDMN…TDQAKEYLSL (71 aa). Residues R307 and R312 each contribute to the DNA site.

Belongs to the RuvB family. Homohexamer. Forms an RuvA(8)-RuvB(12)-Holliday junction (HJ) complex. HJ DNA is sandwiched between 2 RuvA tetramers; dsDNA enters through RuvA and exits via RuvB. An RuvB hexamer assembles on each DNA strand where it exits the tetramer. Each RuvB hexamer is contacted by two RuvA subunits (via domain III) on 2 adjacent RuvB subunits; this complex drives branch migration. In the full resolvosome a probable DNA-RuvA(4)-RuvB(12)-RuvC(2) complex forms which resolves the HJ.

It is found in the cytoplasm. It carries out the reaction ATP + H2O = ADP + phosphate + H(+). Its function is as follows. The RuvA-RuvB-RuvC complex processes Holliday junction (HJ) DNA during genetic recombination and DNA repair, while the RuvA-RuvB complex plays an important role in the rescue of blocked DNA replication forks via replication fork reversal (RFR). RuvA specifically binds to HJ cruciform DNA, conferring on it an open structure. The RuvB hexamer acts as an ATP-dependent pump, pulling dsDNA into and through the RuvAB complex. RuvB forms 2 homohexamers on either side of HJ DNA bound by 1 or 2 RuvA tetramers; 4 subunits per hexamer contact DNA at a time. Coordinated motions by a converter formed by DNA-disengaged RuvB subunits stimulates ATP hydrolysis and nucleotide exchange. Immobilization of the converter enables RuvB to convert the ATP-contained energy into a lever motion, pulling 2 nucleotides of DNA out of the RuvA tetramer per ATP hydrolyzed, thus driving DNA branch migration. The RuvB motors rotate together with the DNA substrate, which together with the progressing nucleotide cycle form the mechanistic basis for DNA recombination by continuous HJ branch migration. Branch migration allows RuvC to scan DNA until it finds its consensus sequence, where it cleaves and resolves cruciform DNA. The sequence is that of Holliday junction branch migration complex subunit RuvB from Wolbachia sp. subsp. Drosophila simulans (strain wRi).